The chain runs to 293 residues: Ribosomal protein L11 methyltransferase (293 aa).

Thr-145, Gly-166, Asp-188, and Asn-230 together coordinate S-adenosyl-L-methionine.

This sequence belongs to the methyltransferase superfamily. PrmA family.

The protein resides in the cytoplasm. It catalyses the reaction L-lysyl-[protein] + 3 S-adenosyl-L-methionine = N(6),N(6),N(6)-trimethyl-L-lysyl-[protein] + 3 S-adenosyl-L-homocysteine + 3 H(+). Its function is as follows. Methylates ribosomal protein L11. This Shewanella sp. (strain ANA-3) protein is Ribosomal protein L11 methyltransferase.